The sequence spans 299 residues: MEPNPIFSEFQLEFFKRIKMQPKSIETLNDVSEVMSGCAQIFSFENLDVVANTTEPLNREVIIQQLVNNKQGGLCYKINSVFYYFIKSFGFNIYQVRCCVENQETHDCWQINGAHIINIIEYENKKYLADVAFGCNLSYEPIPFSEEIIESCTGLYRIRKVDNIIRDIKYTYLLEFKKPDSFSPESARLWTNGYAFDPLVKAIDIDENDKIDSHATQIQQLIIDDPTKEFSVKPLATKVVNNESIATLTSNSFTLTNCKTGEKTKVTFDINNEIKQLEQFNQHLISIFNLPPLKFLPKI.

Cys-75 functions as the Acyl-thioester intermediate in the catalytic mechanism. Catalysis depends on residues His-115 and Asp-130.

Belongs to the arylamine N-acetyltransferase family.

The catalysed reaction is an arylamine + acetyl-CoA = an N-acetylarylamine + CoA. In Dictyostelium discoideum (Social amoeba), this protein is Probable arylamine N-acetyltransferase 2.